A 288-amino-acid polypeptide reads, in one-letter code: ATP synthase gamma chain (288 aa).

The protein belongs to the ATPase gamma chain family. In terms of assembly, F-type ATPases have 2 components, CF(1) - the catalytic core - and CF(0) - the membrane proton channel. CF(1) has five subunits: alpha(3), beta(3), gamma(1), delta(1), epsilon(1). CF(0) has three main subunits: a, b and c.

Its subcellular location is the cell inner membrane. In terms of biological role, produces ATP from ADP in the presence of a proton gradient across the membrane. The gamma chain is believed to be important in regulating ATPase activity and the flow of protons through the CF(0) complex. The chain is ATP synthase gamma chain from Polaromonas naphthalenivorans (strain CJ2).